A 180-amino-acid polypeptide reads, in one-letter code: ATP-dependent protease subunit HslV (180 aa).

Threonine 5 is a catalytic residue. Na(+)-binding residues include glycine 165, cysteine 168, and threonine 171.

The protein belongs to the peptidase T1B family. HslV subfamily. In terms of assembly, a double ring-shaped homohexamer of HslV is capped on each side by a ring-shaped HslU homohexamer. The assembly of the HslU/HslV complex is dependent on binding of ATP.

The protein localises to the cytoplasm. It carries out the reaction ATP-dependent cleavage of peptide bonds with broad specificity.. With respect to regulation, allosterically activated by HslU binding. Functionally, protease subunit of a proteasome-like degradation complex believed to be a general protein degrading machinery. The polypeptide is ATP-dependent protease subunit HslV (Helicobacter pylori (strain P12)).